Here is a 388-residue protein sequence, read N- to C-terminus: P2X purinoceptor 4 (388 aa).

At 1 to 33 (MTGCCTVLGAFLFEYDTPRIVLIRSRKVGLMNR) the chain is on the cytoplasmic side. Residues 34–54 (TVQLLILAYVIGWVFVWEKGY) form a helical membrane-spanning segment. The Extracellular segment spans residues 55-338 (QETDSVVSSV…KFDIIPTMIN (284 aa)). ATP is bound by residues Lys-67 and Lys-69. CTP is bound by residues Lys-67 and Lys-69. 5 N-linked (GlcNAc...) asparagine glycosylation sites follow: Asn-75, Asn-110, Asn-131, Asn-153, and Asn-184. 3 disulfides stabilise this stretch: Cys-116–Cys-165, Cys-126–Cys-149, and Cys-132–Cys-159. ATP is bound by residues Thr-186 and Leu-188. Residue Thr-186 participates in CTP binding. N-linked (GlcNAc...) asparagine glycans are attached at residues Asn-199 and Asn-208. Intrachain disulfides connect Cys-217–Cys-227 and Cys-261–Cys-270. Positions 293, 295, and 313 each coordinate ATP. The CTP site is built by Asn-293, Arg-295, and Lys-313. Residues 339 to 359 (IGSGLALLGVATVLCDVIVLY) traverse the membrane as a helical segment. The Cytoplasmic portion of the chain corresponds to 360 to 388 (CMKKRYYYREKKYKYVEDYEQGLGNQMEQ).

The protein belongs to the P2X receptor family. As to quaternary structure, functional P2RXs are organized as homomeric and heteromeric trimers. Forms heterotrimer with P2RX1. Interacts with P2RX7 (via C-terminus); this interaction is functional only in the presence of ATP. Forms heterotrimer with P2RX4; functional differences between homomeric P2RX4 and P2RX4/6 heterotrimer are minor. Interacts with AP1M2.

It is found in the cell membrane. The protein localises to the lysosome membrane. It carries out the reaction K(+)(in) = K(+)(out). It catalyses the reaction Na(+)(in) = Na(+)(out). The enzyme catalyses Ca(2+)(in) = Ca(2+)(out). With respect to regulation, activated by ATP. pH-dependent and inhibited by acidic pH. In terms of biological role, ATP-gated nonselective transmembrane cation channel permeable to potassium, sodium and calcium. CTP, but not GTP or UTP, functions as a weak affinity agonist for P2RX4. Activated by extracellularly released ATP, it plays multiple role in immunity and central nervous system physiology. Could also function as an ATP-gated cation channel of lysosomal membranes. The polypeptide is P2X purinoceptor 4 (P2RX4) (Bos taurus (Bovine)).